Reading from the N-terminus, the 360-residue chain is Phospho-N-acetylmuramoyl-pentapeptide-transferase (360 aa).

The next 10 helical transmembrane spans lie at 25-45 (RGIL…PWMI), 73-93 (TMGG…WADL), 97-117 (YVWV…VDDY), 135-155 (FWQS…APSA), 170-190 (IPLG…SSNA), 199-219 (GLAI…CYLS), 236-256 (AGEL…FLWF), 263-283 (VFMG…MAVI), 288-308 (IVLF…VIQV), and 338-358 (VIVR…ATLK).

The protein belongs to the glycosyltransferase 4 family. MraY subfamily. Mg(2+) is required as a cofactor.

It localises to the cell inner membrane. It carries out the reaction UDP-N-acetyl-alpha-D-muramoyl-L-alanyl-gamma-D-glutamyl-meso-2,6-diaminopimeloyl-D-alanyl-D-alanine + di-trans,octa-cis-undecaprenyl phosphate = di-trans,octa-cis-undecaprenyl diphospho-N-acetyl-alpha-D-muramoyl-L-alanyl-D-glutamyl-meso-2,6-diaminopimeloyl-D-alanyl-D-alanine + UMP. It participates in cell wall biogenesis; peptidoglycan biosynthesis. Functionally, catalyzes the initial step of the lipid cycle reactions in the biosynthesis of the cell wall peptidoglycan: transfers peptidoglycan precursor phospho-MurNAc-pentapeptide from UDP-MurNAc-pentapeptide onto the lipid carrier undecaprenyl phosphate, yielding undecaprenyl-pyrophosphoryl-MurNAc-pentapeptide, known as lipid I. The sequence is that of Phospho-N-acetylmuramoyl-pentapeptide-transferase from Pseudomonas savastanoi pv. phaseolicola (strain 1448A / Race 6) (Pseudomonas syringae pv. phaseolicola (strain 1448A / Race 6)).